Here is a 415-residue protein sequence, read N- to C-terminus: Maltose excess protein 1, chloroplastic (415 aa).

The segment at 74–93 (SESDSDSDFPHENQQGNPGL) is disordered. Helical transmembrane passes span 139–159 (ALSA…LSLL), 176–196 (LGVV…AMPI), 199–219 (FVAT…YYFG), 231–251 (DVIT…TFVP), 252–272 (LVPN…AAII), 286–306 (FVGS…PVSQ), 322–342 (SITM…ALFI), 345–365 (LMWL…NILC), and 373–393 (SQSF…LALW).

In terms of tissue distribution, expressed in leaves and roots. Expressed in root cap cells.

Its subcellular location is the plastid. The protein localises to the chloroplast inner membrane. Its function is as follows. Probable maltose transporter. Essential for the conversion of starch to sucrose in leaves at night, probably via the export of maltose from the chloroplast. Required for root cap cells formation. The chain is Maltose excess protein 1, chloroplastic (MEX1) from Arabidopsis thaliana (Mouse-ear cress).